The chain runs to 185 residues: Ovomucoid (185 aa).

Kazal-like domains follow at residues 1 to 63 (VEVD…ECRE), 64 to 128 (AVPM…ECRK), and 131 to 185 (AAVS…FGKC). Intrachain disulfides connect cysteine 5–cysteine 43, cysteine 22–cysteine 40, cysteine 30–cysteine 61, cysteine 69–cysteine 108, cysteine 86–cysteine 105, cysteine 94–cysteine 126, cysteine 137–cysteine 167, cysteine 145–cysteine 164, and cysteine 153–cysteine 185. Asparagine 174 carries an N-linked (GlcNAc...) asparagine glycan.

The protein resides in the secreted. This is Ovomucoid from Meleagris gallopavo (Wild turkey).